A 266-amino-acid chain; its full sequence is Glucosamine-6-phosphate deaminase (266 aa).

D72 acts as the Proton acceptor; for enolization step in catalysis. D141 functions as the For ring-opening step in the catalytic mechanism. H143 acts as the Proton acceptor; for ring-opening step in catalysis. Residue E148 is the For ring-opening step of the active site.

The protein belongs to the glucosamine/galactosamine-6-phosphate isomerase family. NagB subfamily. In terms of assembly, homohexamer.

The catalysed reaction is alpha-D-glucosamine 6-phosphate + H2O = beta-D-fructose 6-phosphate + NH4(+). The protein operates within amino-sugar metabolism; N-acetylneuraminate degradation; D-fructose 6-phosphate from N-acetylneuraminate: step 5/5. With respect to regulation, allosterically activated by N-acetylglucosamine 6-phosphate (GlcNAc6P). Functionally, catalyzes the reversible isomerization-deamination of glucosamine 6-phosphate (GlcN6P) to form fructose 6-phosphate (Fru6P) and ammonium ion. The protein is Glucosamine-6-phosphate deaminase of Yersinia pestis bv. Antiqua (strain Antiqua).